The chain runs to 360 residues: Mannose-1-phosphate guanylyltransferase catalytic subunit beta (360 aa).

The interval 2-222 is substrate-binding domain; sequence KALILVGGYG…QGFWMDIGQP (221 aa). Residue D110 coordinates GDP-alpha-D-mannose. D110 provides a ligand contact to Mg(2+). Residue K162 is part of the active site. Position 218 (D218) interacts with GDP-alpha-D-mannose. The tract at residues 245–360 is hexapeptide repeat domain; that stretch reads YSGPGIVGNV…ESVPEPRIIM (116 aa).

This sequence belongs to the transferase hexapeptide repeat family. As to quaternary structure, component of the GMPPA-GMPPB mannose-1-phosphate guanylyltransferase complex composed of 4 GMPPA subunits and 8 GMPPB subunits; the complex is organized into three layers, a central layer made up of 2 GMPPA dimers sandwiched between two layers each made up of 2 GMPPB dimers. GMPPB catalytic activity is reduced when part of the complex and binding of GDP-alpha-D-Mannose by GMPPA induces allosteric feedback inhibition of GMPPB. Mg(2+) serves as cofactor.

The protein resides in the cytoplasm. The catalysed reaction is alpha-D-mannose 1-phosphate + GTP + H(+) = GDP-alpha-D-mannose + diphosphate. It functions in the pathway nucleotide-sugar biosynthesis; GDP-alpha-D-mannose biosynthesis; GDP-alpha-D-mannose from alpha-D-mannose 1-phosphate (GTP route): step 1/1. Its activity is regulated as follows. Enzyme activity is reduced by incorporation into the GMPPA-GMPPB mannose-1-phosphate guanylyltransferase complex. Allosterically inhibited, when part of the GMPPA-GMPPB complex, by GDP-alpha-D-mannose binding to GMPPA. Catalytic subunit of the GMPPA-GMPPB mannose-1-phosphate guanylyltransferase complex. Catalyzes the formation of GDP-mannose, an essential precursor of glycan moieties of glycoproteins and glycolipids. Can catalyze the reverse reaction in vitro. Together with GMPPA regulates GDP-alpha-D-mannose levels. The chain is Mannose-1-phosphate guanylyltransferase catalytic subunit beta from Mus musculus (Mouse).